Reading from the N-terminus, the 121-residue chain is Large ribosomal subunit protein bL17 (121 aa).

It belongs to the bacterial ribosomal protein bL17 family. As to quaternary structure, part of the 50S ribosomal subunit. Contacts protein L32.

The chain is Large ribosomal subunit protein bL17 from Mycoplasmopsis agalactiae (strain NCTC 10123 / CIP 59.7 / PG2) (Mycoplasma agalactiae).